The following is a 451-amino-acid chain: MLDPILLRKDLQTVVDRLKSRGVDFDIARFNELESRRKAVQTETESQQARRNALAKQIGQLKGKGAPEAEVQAVMAESQALPARLKALEDELAQTQAQLNDLLMSVPNLPHASVPQGASSDENVEVRRWLPGAADERGNPAALGFEVRDHVAVGEPLGLDFDLAARLSGARFSFMRGQMARLHRALAQFMLDLQTGTHGYTECYTPYIVNSSTLFGTGQLPKFKDDMFFVTKGGGDDEPKVDEQGNPLAREDQYLISTSEITLTSVVRETIVAGADLPLRLTAHTPCFRSEAGSGGRDTRGMIRQHQFDKVEMVQIAHPEHSYEALEEMVGHAERVLQLLELPYRVMLLCTGDMGFGSAKTYDLEVWLPAQDTWREISSVSNCETFQARRMQARFRNAQNKPEYVHTLNGSGLAVGRALVAVLENCQQADGSVRVPAVLQPYMGGLTVLEP.

258-260 lines the L-serine pocket; it reads TSE. An ATP-binding site is contributed by 289–291; sequence RSE. Glutamate 312 lines the L-serine pocket. Residue 376–379 coordinates ATP; the sequence is EISS. Residue serine 411 participates in L-serine binding.

It belongs to the class-II aminoacyl-tRNA synthetase family. Type-1 seryl-tRNA synthetase subfamily. As to quaternary structure, homodimer. The tRNA molecule binds across the dimer.

The protein resides in the cytoplasm. It catalyses the reaction tRNA(Ser) + L-serine + ATP = L-seryl-tRNA(Ser) + AMP + diphosphate + H(+). The enzyme catalyses tRNA(Sec) + L-serine + ATP = L-seryl-tRNA(Sec) + AMP + diphosphate + H(+). It functions in the pathway aminoacyl-tRNA biosynthesis; selenocysteinyl-tRNA(Sec) biosynthesis; L-seryl-tRNA(Sec) from L-serine and tRNA(Sec): step 1/1. In terms of biological role, catalyzes the attachment of serine to tRNA(Ser). Is also able to aminoacylate tRNA(Sec) with serine, to form the misacylated tRNA L-seryl-tRNA(Sec), which will be further converted into selenocysteinyl-tRNA(Sec). The protein is Serine--tRNA ligase of Bordetella bronchiseptica (strain ATCC BAA-588 / NCTC 13252 / RB50) (Alcaligenes bronchisepticus).